Reading from the N-terminus, the 214-residue chain is NKG2-D type II integral membrane protein (214 aa).

Over 1-56 (MGWIRDRRSPSSMEIRELHNRDVINRGAFKSRQKRTQTLITSKCGENPSPFFLARS) the chain is Cytoplasmic. A helical; Signal-anchor for type II membrane protein membrane pass occupies residues 57 to 77 (IAIAMGIRFIVMVMIYSGMII). Residues 78 to 214 (NLLFNQEAPS…NTYICMKRTV (137 aa)) are Extracellular-facing. Cystine bridges form between Cys94/Cys103 and Cys97/Cys108. Positions 98-210 (PKNWICYRNS…CLTLNTYICM (113 aa)) constitute a C-type lectin domain. Residues Asn113, Asn129, Asn161, and Asn184 are each glycosylated (N-linked (GlcNAc...) asparagine). Intrachain disulfides connect Cys125–Cys209 and Cys187–Cys201.

As to quaternary structure, homodimer; disulfide-linked. Heterohexamer composed of two subunits of KLRK1 and four subunits of HCST/DAP10. Interacts (via transmembrane domain) with HCST/DAP10 (via transmembrane domain); the interaction is required for KLRK1 NK cell surface and induces NK cell-mediated cytotoxicity. Can form disulfide-bonded heterodimer with CD94. Interacts with CEACAM1; recruits PTPN6 that dephosphorylates VAV1. As to expression, detected in peripheral blood leukocytes, macrophages, monocytes and natural killer cells.

The protein localises to the cell membrane. Functionally, functions as an activating and costimulatory receptor involved in immunosurveillance upon binding to various cellular stress-inducible ligands displayed at the surface of autologous tumor cells and virus-infected cells. Provides both stimulatory and costimulatory innate immune responses on activated killer (NK) cells, leading to cytotoxic activity. Acts as a costimulatory receptor for T-cell receptor (TCR) in CD8(+) T-cell-mediated adaptive immune responses by amplifying T-cell activation. Stimulates perforin-mediated elimination of ligand-expressing tumor cells. Signaling involves calcium influx, culminating in the expression of TNF-alpha. Participates in NK cell-mediated bone marrow graft rejection. May play a regulatory role in differentiation and survival of NK cells. Binds to ligands belonging to various subfamilies of MHC class I-related glycoproteins. The sequence is that of NKG2-D type II integral membrane protein (KLRK1) from Sus scrofa (Pig).